The sequence spans 186 residues: Small ribosomal subunit protein uS5 (186 aa).

The 64-residue stretch at 20–83 folds into the S5 DRBM domain; that stretch reads FVDKLVHINR…EAAKRDMIFV (64 aa).

It belongs to the universal ribosomal protein uS5 family. As to quaternary structure, part of the 30S ribosomal subunit. Contacts proteins S4 and S8.

Functionally, with S4 and S12 plays an important role in translational accuracy. Located at the back of the 30S subunit body where it stabilizes the conformation of the head with respect to the body. The protein is Small ribosomal subunit protein uS5 of Brucella abortus (strain S19).